A 178-amino-acid chain; its full sequence is PEST proteolytic signal-containing nuclear protein (178 aa).

The segment covering 1 to 15 (MADGKAGEEKPEKPQ) has biased composition (basic and acidic residues). Residues 1 to 82 (MADGKAGEEK…FAIGSQTARK (82 aa)) form a disordered region. N-acetylalanine is present on Ala2. Positions 37-47 (SSSNGGESSSR) are enriched in low complexity. Ser53 is modified (phosphoserine). Lys64 is modified (N6-acetyllysine). Residues Ser77, Ser87, and Ser119 each carry the phosphoserine modification. The interval 134–158 (NIGRDTPTSAGPNSFNKGKHGFSDN) is disordered. Thr139 bears the Phosphothreonine mark. Over residues 139-149 (TPTSAGPNSFN) the composition is skewed to polar residues. Position 147 is a phosphoserine (Ser147). N6-acetyllysine is present on residues Lys150 and Lys152.

As to quaternary structure, interacts with UHRF2/NIRF. Post-translationally, ubiquitinated; mediated by UHRF2 and leading to its subsequent proteasomal degradation. In terms of processing, N-terminally acetylated in a HYPK-dependent manner by the NatA acetyltransferase complex which is composed of NAA10 and NAA15.

The protein resides in the nucleus. May be involved in cell cycle regulation. The protein is PEST proteolytic signal-containing nuclear protein (Pcnp) of Mus musculus (Mouse).